A 43-amino-acid chain; its full sequence is GCKKDRKPCSYQADCCNCCPIGTCAPSTNWILPGCSTGPFMAR.

Intrachain disulfides connect Cys2–Cys16, Cys9–Cys19, Cys15–Cys24, and Cys18–Cys35. At Met41 the chain carries D-methionine. Residue Arg43 is a propeptide, removed by a carboxypeptidase.

It belongs to the conotoxin I1 superfamily. In terms of tissue distribution, expressed by the venom duct.

The protein resides in the secreted. Iota-conotoxins bind to voltage-gated sodium channels (Nav) and act as agonists by shifting the voltage-dependence of activation to more hyperpolarized levels. Produces general excitatory symptoms. In Conus striatus (Striated cone), this protein is Iota-conotoxin-like S11.2.